The following is a 372-amino-acid chain: THAP domain-containing protein 5 (372 aa).

Residues 1-85 form a THAP-type zinc finger; sequence MTRYCAATRC…LKPNAIPTLF (85 aa). A coiled-coil region spans residues 306 to 362; that stretch reads TDRHYLRQKIAKLQSKIAVLEAQENATLSRLRLLESVIAKLKQENLLSDEKLKILEN.

It localises to the nucleus. In Xenopus laevis (African clawed frog), this protein is THAP domain-containing protein 5 (thap5).